The chain runs to 205 residues: Holliday junction branch migration complex subunit RuvA (205 aa).

The segment at 1 to 64 is domain I; the sequence is MIGRLRGTLA…EDAHLLYGFA (64 aa). The domain II stretch occupies residues 65–143; the sequence is EKRERELFRE…AWETSPAMFT (79 aa). Residues 144-154 form a flexible linker region; the sequence is LVSDGPLPVAS. The segment at 154 to 205 is domain III; that stretch reads SESSAEADAVSALVSLGYKPQEASKAIAAIKDKAGLSSEELIRRSLKGMIAK.

Belongs to the RuvA family. As to quaternary structure, homotetramer. Forms an RuvA(8)-RuvB(12)-Holliday junction (HJ) complex. HJ DNA is sandwiched between 2 RuvA tetramers; dsDNA enters through RuvA and exits via RuvB. An RuvB hexamer assembles on each DNA strand where it exits the tetramer. Each RuvB hexamer is contacted by two RuvA subunits (via domain III) on 2 adjacent RuvB subunits; this complex drives branch migration. In the full resolvosome a probable DNA-RuvA(4)-RuvB(12)-RuvC(2) complex forms which resolves the HJ.

It is found in the cytoplasm. In terms of biological role, the RuvA-RuvB-RuvC complex processes Holliday junction (HJ) DNA during genetic recombination and DNA repair, while the RuvA-RuvB complex plays an important role in the rescue of blocked DNA replication forks via replication fork reversal (RFR). RuvA specifically binds to HJ cruciform DNA, conferring on it an open structure. The RuvB hexamer acts as an ATP-dependent pump, pulling dsDNA into and through the RuvAB complex. HJ branch migration allows RuvC to scan DNA until it finds its consensus sequence, where it cleaves and resolves the cruciform DNA. This is Holliday junction branch migration complex subunit RuvA from Pseudomonas entomophila (strain L48).